We begin with the raw amino-acid sequence, 186 residues long: ATP synthase subunit delta (186 aa).

The protein belongs to the ATPase delta chain family. In terms of assembly, F-type ATPases have 2 components, F(1) - the catalytic core - and F(0) - the membrane proton channel. F(1) has five subunits: alpha(3), beta(3), gamma(1), delta(1), epsilon(1). F(0) has three main subunits: a(1), b(2) and c(10-14). The alpha and beta chains form an alternating ring which encloses part of the gamma chain. F(1) is attached to F(0) by a central stalk formed by the gamma and epsilon chains, while a peripheral stalk is formed by the delta and b chains.

The protein localises to the cell inner membrane. F(1)F(0) ATP synthase produces ATP from ADP in the presence of a proton or sodium gradient. F-type ATPases consist of two structural domains, F(1) containing the extramembraneous catalytic core and F(0) containing the membrane proton channel, linked together by a central stalk and a peripheral stalk. During catalysis, ATP synthesis in the catalytic domain of F(1) is coupled via a rotary mechanism of the central stalk subunits to proton translocation. In terms of biological role, this protein is part of the stalk that links CF(0) to CF(1). It either transmits conformational changes from CF(0) to CF(1) or is implicated in proton conduction. This is ATP synthase subunit delta from Brucella canis (strain ATCC 23365 / NCTC 10854 / RM-666).